A 665-amino-acid polypeptide reads, in one-letter code: MSSPHRASTTQQLADLSLTEGEHDEGKPLSIDYLQGHEGLIEEVLKWSEHEQLDFMDKIVHRLSHYQLGKVDNFIRPMLQRDFISNLPAHLVELILFNVNSDSLKSCEEVSTSWRCALARGQHWKKLIEKNVRSDSLWWGLSEKRQWDKFLNISRDMSVRRICEKFNYDVNIKRDKLDQLILMHVFYSKLYPKIIRDIHNIDNNWKRGNYKMTRINCQSENSKGVYCLQYDDDKIVSGLRDNTIKIWDRKDYSCSRILSGHTGSVLCLQYDNRVIISGSSDATVRVWDVETGECIKTLIHHCEAVLHLRFANGIMVTCSKDRSIAVWDMVSPRDITIRRVLVGHRAAVNVVDFDDRYIVSASGDRTIKVWSMDTLEFVRTLAGHRRGIACLQYRGRLVVSGSSDNTIRLWDIHSGVCLRVLEGHEELVRCIRFDEKRIVSGAYDGKIKVWDLQAALDPRALSSEICLCSLVQHTGRVFRLQFDDFQIVSSSHDDTILIWDFLDAPPSGLPSSTNRATLPELPNQAAVARAQMLFEMAARREIERRDREVVEEPALRPRANAARRHNADIAAAAAAAEAARGAGDNDESSSEEDLDRVDQVNNPNVAGPAPPQPHNQNHRRRQPRPELPVRLMQEMAAFDNMRRQQNNMDHLGGGDVDEEMPDGGP.

In terms of domain architecture, F-box spans 81–127; it reads RDFISNLPAHLVELILFNVNSDSLKSCEEVSTSWRCALARGQHWKKL. 7 WD repeats span residues 220–257, 260–299, 301–337, 343–380, 383–420, 423–460, and 472–509; these read ENSKGVYCLQYDDDKIVSGLRDNTIKIWDRKDYSCSRI, GHTGSVLCLQYDNRVIISGSSDATVRVWDVETGECIKTLI, HCEAVLHLRFANGIMVTCSKDRSIAVWDMVSPRDITI, GHRAAVNVVDFDDRYIVSASGDRTIKVWSMDTLEFVRT, GHRRGIACLQYRGRLVVSGSSDNTIRLWDIHSGVCLRV, GHEELVRCIRFDEKRIVSGAYDGKIKVWDLQAALDPRA, and QHTGRVFRLQFDDFQIVSSSHDDTILIWDFLDAPPSGL. The interval 574–665 is disordered; that stretch reads AAAEAARGAG…VDEEMPDGGP (92 aa). Acidic residues-rich tracts occupy residues 584-595 and 655-665; these read DNDESSSEEDLD and DVDEEMPDGGP.

Part of a SCF (SKP1-cullin-F-box) protein ligase complex.

The protein localises to the cytoplasm. Functions cell autonomously to negatively regulate cell cycle progression. Required to restrain cell proliferation in response to developmental cues. Probably recognizes and binds to some proteins and promotes their ubiquitination and degradation. The chain is F-box/WD repeat-containing protein lin-23 (lin-23) from Caenorhabditis elegans.